The sequence spans 151 residues: SsrA-binding protein (151 aa).

This sequence belongs to the SmpB family.

Its subcellular location is the cytoplasm. In terms of biological role, required for rescue of stalled ribosomes mediated by trans-translation. Binds to transfer-messenger RNA (tmRNA), required for stable association of tmRNA with ribosomes. tmRNA and SmpB together mimic tRNA shape, replacing the anticodon stem-loop with SmpB. tmRNA is encoded by the ssrA gene; the 2 termini fold to resemble tRNA(Ala) and it encodes a 'tag peptide', a short internal open reading frame. During trans-translation Ala-aminoacylated tmRNA acts like a tRNA, entering the A-site of stalled ribosomes, displacing the stalled mRNA. The ribosome then switches to translate the ORF on the tmRNA; the nascent peptide is terminated with the 'tag peptide' encoded by the tmRNA and targeted for degradation. The ribosome is freed to recommence translation, which seems to be the essential function of trans-translation. The protein is SsrA-binding protein of Flavobacterium johnsoniae (strain ATCC 17061 / DSM 2064 / JCM 8514 / BCRC 14874 / CCUG 350202 / NBRC 14942 / NCIMB 11054 / UW101) (Cytophaga johnsonae).